The following is a 400-amino-acid chain: Acetate kinase (400 aa).

Residue Asn10 coordinates Mg(2+). Position 17 (Lys17) interacts with ATP. Substrate is bound at residue Arg91. Asp150 functions as the Proton donor/acceptor in the catalytic mechanism. Residues 210–214, 285–287, and 333–337 each bind ATP; these read HLGNG, DCR, and GIGEN. Glu387 lines the Mg(2+) pocket.

The protein belongs to the acetokinase family. In terms of assembly, homodimer. The cofactor is Mg(2+). Mn(2+) is required as a cofactor.

It localises to the cytoplasm. It carries out the reaction acetate + ATP = acetyl phosphate + ADP. It functions in the pathway metabolic intermediate biosynthesis; acetyl-CoA biosynthesis; acetyl-CoA from acetate: step 1/2. Functionally, catalyzes the formation of acetyl phosphate from acetate and ATP. Can also catalyze the reverse reaction. This chain is Acetate kinase, found in Salmonella typhi.